An 880-amino-acid chain; its full sequence is Alanine--tRNA ligase (880 aa).

Residues His567, His571, Cys669, and His673 each coordinate Zn(2+).

The protein belongs to the class-II aminoacyl-tRNA synthetase family. Zn(2+) serves as cofactor.

Its subcellular location is the cytoplasm. It carries out the reaction tRNA(Ala) + L-alanine + ATP = L-alanyl-tRNA(Ala) + AMP + diphosphate. In terms of biological role, catalyzes the attachment of alanine to tRNA(Ala) in a two-step reaction: alanine is first activated by ATP to form Ala-AMP and then transferred to the acceptor end of tRNA(Ala). Also edits incorrectly charged Ser-tRNA(Ala) and Gly-tRNA(Ala) via its editing domain. This is Alanine--tRNA ligase from Syntrophomonas wolfei subsp. wolfei (strain DSM 2245B / Goettingen).